We begin with the raw amino-acid sequence, 316 residues long: Delta(1)-pyrroline-2-carboxylate reductase (316 aa).

This sequence belongs to the ornithine cyclodeaminase/mu-crystallin family.

The enzyme catalyses L-proline + NAD(+) = 1-pyrroline-2-carboxylate + NADH + H(+). It catalyses the reaction L-proline + NADP(+) = 1-pyrroline-2-carboxylate + NADPH + H(+). Functionally, catalyzes the reduction of Delta(1)-pyrroline-2-carboxylate (Pyr2C) to L-proline, using preferentially NADPH over NADH as the electron donor. Is likely involved in a degradation pathway that converts trans-3-hydroxy-L-proline (t3LHyp) to L-proline, which would allow P.denitrificans to grow on t3LHyp as a sole carbon source. The sequence is that of Delta(1)-pyrroline-2-carboxylate reductase from Paracoccus denitrificans (strain Pd 1222).